We begin with the raw amino-acid sequence, 359 residues long: Ribosome biogenesis protein BRX1 homolog (359 aa).

Positions M1–A12 are enriched in basic residues. Positions M1–R42 are disordered. Positions Q50–T241 constitute a Brix domain.

The protein belongs to the BRX1 family.

It localises to the nucleus. The protein resides in the nucleolus. Required for biogenesis of the 60S ribosomal subunit. The protein is Ribosome biogenesis protein BRX1 homolog of Drosophila melanogaster (Fruit fly).